We begin with the raw amino-acid sequence, 107 residues long: U1-lycotoxin-Ls1b (107 aa).

An N-terminal signal peptide occupies residues 1–20 (MMKVLVVVALLVTLISYSSS). A propeptide spanning residues 21 to 41 (EGIDDLEADELLSLMANEQTR) is cleaved from the precursor. Cystine bridges form between C44-C59, C51-C68, C58-C86, and C70-C84.

Belongs to the neurotoxin 19 (CSTX) family. 04 (U1-Lctx) subfamily. Expressed by the venom gland.

It localises to the secreted. The polypeptide is U1-lycotoxin-Ls1b (Lycosa singoriensis (Wolf spider)).